Reading from the N-terminus, the 270-residue chain is Formamidopyrimidine-DNA glycosylase (270 aa).

The active-site Schiff-base intermediate with DNA is Pro2. The active-site Proton donor is Glu3. The Proton donor; for beta-elimination activity role is filled by Lys59. Residues His91, Arg110, and Lys151 each coordinate DNA. The FPG-type zinc-finger motif lies at 236 to 270 (RVYGRDKEPCVTCGQQVKSKVLGGRNTFWCSRCQK). Arg260 (proton donor; for delta-elimination activity) is an active-site residue.

Belongs to the FPG family. Monomer. It depends on Zn(2+) as a cofactor.

It catalyses the reaction Hydrolysis of DNA containing ring-opened 7-methylguanine residues, releasing 2,6-diamino-4-hydroxy-5-(N-methyl)formamidopyrimidine.. The enzyme catalyses 2'-deoxyribonucleotide-(2'-deoxyribose 5'-phosphate)-2'-deoxyribonucleotide-DNA = a 3'-end 2'-deoxyribonucleotide-(2,3-dehydro-2,3-deoxyribose 5'-phosphate)-DNA + a 5'-end 5'-phospho-2'-deoxyribonucleoside-DNA + H(+). In terms of biological role, involved in base excision repair of DNA damaged by oxidation or by mutagenic agents. Acts as a DNA glycosylase that recognizes and removes damaged bases. Has a preference for oxidized purines, such as 7,8-dihydro-8-oxoguanine (8-oxoG). Has AP (apurinic/apyrimidinic) lyase activity and introduces nicks in the DNA strand. Cleaves the DNA backbone by beta-delta elimination to generate a single-strand break at the site of the removed base with both 3'- and 5'-phosphates. This is Formamidopyrimidine-DNA glycosylase from Bdellovibrio bacteriovorus (strain ATCC 15356 / DSM 50701 / NCIMB 9529 / HD100).